The following is a 134-amino-acid chain: MIAPDTSVLVAGFATWHEGHEAAVRALNRGVHLIAHAAVETYSVLTRLPPPHRIAPVAVHAYLADITSSNYLALDACSYRGLTDHLAEHDVTGGATYDALVGFTAKAAGAKLLTRDLRAVETYERLRVEVELVT.

Residues Ala-3–Leu-126 form the PINc domain. 2 residues coordinate Mg(2+): Asp-5 and Asp-98.

It belongs to the PINc/VapC protein family. Mg(2+) is required as a cofactor.

Functionally, toxic component of a type II toxin-antitoxin (TA) system. An RNase. Its cognate antitoxin is VapB40. The sequence is that of Ribonuclease VapC40 from Mycobacterium tuberculosis (strain CDC 1551 / Oshkosh).